We begin with the raw amino-acid sequence, 239 residues long: MVFDLGVRKDWENLPETFVAGIKGSGCKIEVQTDVASLLQENGQSLDDVGAVIWSHWHFDHAGDPQTFPGTTDLIVGPGFKSNIIPAYPTVRDSHVNETAWEGRELIEIDFKGDKGLKIGKFDAYDFYGDGSFYLLSSPGHAVGHMSALARTTADPPSFMLLGGDIAHHCGEFRPSPYTPLPEMMSPNPLGRTLSACPGRLFLNIHPWKDPERPFFDPTTEPGWHLEAAEAKQSIDKLI.

Zn(2+) contacts are provided by H56, H58, D60, H61, H141, and D165.

Belongs to the metallo-beta-lactamase superfamily.

Gamma-lactamase; part of the Fusarium detoxification of benzoxazolinone cluster 2 (FDB2) involved in the degradation of benzoxazolinones produced by the host plant. Maize, wheat, and rye produce the 2 benzoxazinone phytoanticipins 2,4-dihy-droxy-7-methoxy-1,4-benzoxazin-3-one (DIMBOA) and 2,4-dihydroxy-1,4-benzoxazin-3-one (DIBOA) that, due to their inherent instability once released, spontaneously degrade to the more stable corresponding benzoxazolinones, 6-methoxy-2-benzoxazolinone (MBOA) and 2-benzoxazolinone (BOA), respectively. The first step in the detoxification of benzoxazolinones involves the hydrolysis of the cyclic ester bond of benzoxazolinones by the FDB1 cluster gamma-lactamase MBL1 to aminophenols. MBL1 is able to convert BOA into 2-aminophenol (2-AP), as well as MBOA into 5-methoxy-2-aminophenol (2-AMP). The FDB2 cluster N-malonyltransferase FDB2/NAT1 then metabolizes aminophenols via N-malonylation to non-toxic malonamic acids. FDB2/NAT1 converts 2-AP into N-(2-hydroxyphenyl) malonamic acid (HPMA) and 2-AMP into N-(2-hydroxy-4-methoxyphenyl) malonamic acid (HMPMA). The duplicated dienlactone hydrolases DLH1 and DLH2 may provide redundant function for hydrolyzing the lactone moiety in the BOA molecule. The roles of the amidases and other enzymes encoded by the 2 FDB clusters have not been identified so far. This is Gamma-lactamase MBL2 from Gibberella moniliformis (strain M3125 / FGSC 7600) (Maize ear and stalk rot fungus).